Consider the following 73-residue polypeptide: MIPQSVINFKIECCFFVKIEDESLNKLLNLTKLSFINAPVIPLLTINTLPPNLEILELTLGKHKVLIIVFQKV.

This is an uncharacterized protein from Dictyostelium discoideum (Social amoeba).